The primary structure comprises 142 residues: Transcriptional regulator MraZ (142 aa).

SpoVT-AbrB domains follow at residues 5–47 (EYPY…PLPG) and 76–119 (ASKA…NPQR).

The protein belongs to the MraZ family. Forms oligomers.

The protein localises to the cytoplasm. Its subcellular location is the nucleoid. The chain is Transcriptional regulator MraZ from Deinococcus radiodurans (strain ATCC 13939 / DSM 20539 / JCM 16871 / CCUG 27074 / LMG 4051 / NBRC 15346 / NCIMB 9279 / VKM B-1422 / R1).